The following is an 888-amino-acid chain: CRISPR-associated endonuclease/helicase Cas3 (888 aa).

The HD Cas3-type domain maps to 20 to 231; sequence KGNDIHLLIY…AGFCSLADWL (212 aa). Mg(2+)-binding residues include Asp75 and His160. The Helicase ATP-binding domain occupies 301-504; the sequence is DALPVAPGLT…LDTYGLHTDP (204 aa). An ATP-binding site is contributed by 314 to 321; that stretch reads APTGSGKT. Positions 452-455 match the DEAH box motif; sequence DEVH. A Helicase C-terminal domain is found at 556 to 735; that stretch reads MLERMIAAAN…AYRQWLDSIY (180 aa).

This sequence in the N-terminal section; belongs to the CRISPR-associated nuclease Cas3-HD family. The protein in the central section; belongs to the CRISPR-associated helicase Cas3 family. In terms of assembly, interacts with the CasA subunit of Cascade once Cascade has recognized target DNA. Mg(2+) is required as a cofactor.

CRISPR (clustered regularly interspaced short palindromic repeat), is an adaptive immune system that provides protection against mobile genetic elements (viruses, transposable elements and conjugative plasmids). CRISPR clusters contain sequences complementary to antecedent mobile elements and target invading nucleic acids. CRISPR clusters are transcribed and processed into CRISPR RNA (crRNA). Cas3 plus Cascade participate in CRISPR interference, the third stage of CRISPR immunity. Functionally, acts as an endonuclease, a 3'-5'exonuclease, and an ATP-dependent dsDNA helicase. Anneals and unwinds R-loops (in which crRNA binds the target DNA, displacing the noncomplementary strand). Unwinding requires ATP, annealing does not. Required along with the Cascade complex for resistance to bacteriophage lambda infection as well as the ability to cure CRISPR-encoding high-copy number plasmid. A Cas3-CasA fusion protein purified with the Cascade complex nicks target plasmid in the presence but not absence of Mg(2+), and degrades plasmid fully in the presence of Mg(2+) and ATP, suggesting the helicase activity is required for complete degradation. The protein is CRISPR-associated endonuclease/helicase Cas3 (ygcB) of Escherichia coli (strain K12).